The following is a 278-amino-acid chain: HTH-type transcriptional activator RhaS (278 aa).

An HTH araC/xylS-type domain is found at 174 to 272 (NQLMAWLEDH…NWSPRDIRQG (99 aa)). 2 DNA-binding regions (H-T-H motif) span residues 191-212 (EAVA…KQHT) and 239-262 (VTEI…RREF).

In terms of assembly, binds DNA as a dimer.

It localises to the cytoplasm. Functionally, activates expression of the rhaBAD and rhaT operons. The protein is HTH-type transcriptional activator RhaS of Salmonella enteritidis PT4 (strain P125109).